We begin with the raw amino-acid sequence, 426 residues long: UDP-N-acetylglucosamine 1-carboxyvinyltransferase (426 aa).

Residue 22–23 coordinates phosphoenolpyruvate; sequence KN. Arg93 is a UDP-N-acetyl-alpha-D-glucosamine binding site. Cys117 functions as the Proton donor in the catalytic mechanism. A 2-(S-cysteinyl)pyruvic acid O-phosphothioketal modification is found at Cys117. UDP-N-acetyl-alpha-D-glucosamine is bound by residues 162–165, Asp307, and Ile329; that span reads KVSV.

Belongs to the EPSP synthase family. MurA subfamily.

It localises to the cytoplasm. It catalyses the reaction phosphoenolpyruvate + UDP-N-acetyl-alpha-D-glucosamine = UDP-N-acetyl-3-O-(1-carboxyvinyl)-alpha-D-glucosamine + phosphate. It participates in cell wall biogenesis; peptidoglycan biosynthesis. In terms of biological role, cell wall formation. Adds enolpyruvyl to UDP-N-acetylglucosamine. The polypeptide is UDP-N-acetylglucosamine 1-carboxyvinyltransferase (Haemophilus ducreyi (strain 35000HP / ATCC 700724)).